Consider the following 228-residue polypeptide: 7-cyano-7-deazaguanine synthase (228 aa).

8-18 serves as a coordination point for ATP; the sequence is LSGGLDSTTCL. 4 residues coordinate Zn(2+): C188, C198, C201, and C204.

It belongs to the QueC family. The cofactor is Zn(2+).

It catalyses the reaction 7-carboxy-7-deazaguanine + NH4(+) + ATP = 7-cyano-7-deazaguanine + ADP + phosphate + H2O + H(+). It participates in purine metabolism; 7-cyano-7-deazaguanine biosynthesis. In terms of biological role, catalyzes the ATP-dependent conversion of 7-carboxy-7-deazaguanine (CDG) to 7-cyano-7-deazaguanine (preQ(0)). This chain is 7-cyano-7-deazaguanine synthase, found in Legionella pneumophila (strain Corby).